A 103-amino-acid chain; its full sequence is Large ribosomal subunit protein bL21 (103 aa).

Belongs to the bacterial ribosomal protein bL21 family. In terms of assembly, part of the 50S ribosomal subunit. Contacts protein L20.

This protein binds to 23S rRNA in the presence of protein L20. The protein is Large ribosomal subunit protein bL21 of Heliobacterium modesticaldum (strain ATCC 51547 / Ice1).